The sequence spans 670 residues: DNA ligase (670 aa).

Residues 33-37, 82-83, and E114 contribute to the NAD(+) site; these read DAEYD and SL. K116 acts as the N6-AMP-lysine intermediate in catalysis. NAD(+)-binding residues include R137, E174, K291, and K315. Residues C409, C412, C427, and C433 each coordinate Zn(2+). The 78-residue stretch at 593 to 670 folds into the BRCT domain; sequence GAELPLEGKT…TEQDLLELIN (78 aa).

Belongs to the NAD-dependent DNA ligase family. LigA subfamily. Mg(2+) is required as a cofactor. Mn(2+) serves as cofactor.

It catalyses the reaction NAD(+) + (deoxyribonucleotide)n-3'-hydroxyl + 5'-phospho-(deoxyribonucleotide)m = (deoxyribonucleotide)n+m + AMP + beta-nicotinamide D-nucleotide.. Its function is as follows. DNA ligase that catalyzes the formation of phosphodiester linkages between 5'-phosphoryl and 3'-hydroxyl groups in double-stranded DNA using NAD as a coenzyme and as the energy source for the reaction. It is essential for DNA replication and repair of damaged DNA. This is DNA ligase from Vibrio parahaemolyticus serotype O3:K6 (strain RIMD 2210633).